The following is a 50-amino-acid chain: Temporin-SHc (50 aa).

Residues 1 to 10 (FLGTINLSLC) form the signal peptide. The propeptide occupies 11 to 35 (EQERDADEEERRDEPDGSNVEVEKR). Phenylalanine amide is present on Phe48.

Expressed by the skin glands.

The protein resides in the secreted. It is found in the target cell membrane. Amphipathic alpha-helical antimicrobial peptide with potent activity against some Gram-positive bacteria (MIC=4-&gt;80 uM), potent activity against fungi (MIC=10-20 uM), and no activity against Gram-negative bacteria. Does not display anti-leishmania activity. Does not show hemolytic activity (LC(50)&gt;80 uM). The chain is Temporin-SHc from Pelophylax saharicus (Sahara frog).